Reading from the N-terminus, the 438-residue chain is Trigger factor (438 aa).

The region spanning 163-249 is the PPIase FKBP-type domain; sequence EDFVLIDYEG…LKEIRKQILP (87 aa).

This sequence belongs to the FKBP-type PPIase family. Tig subfamily.

The protein localises to the cytoplasm. It catalyses the reaction [protein]-peptidylproline (omega=180) = [protein]-peptidylproline (omega=0). Functionally, involved in protein export. Acts as a chaperone by maintaining the newly synthesized protein in an open conformation. Functions as a peptidyl-prolyl cis-trans isomerase. The protein is Trigger factor of Desulfatibacillum aliphaticivorans.